Consider the following 180-residue polypeptide: Cell division protein SepF (180 aa).

Positions 1–66 (MAFSFKSFFG…NRNGFAYDNG (66 aa)) are disordered. Residues 12 to 23 (ADDEEEEYEDSG) are compositionally biased toward acidic residues. Positions 24–57 (YEQQPNQGQQQPVNSQQQNTSNQSYSGYNNQNQN) are enriched in low complexity.

It belongs to the SepF family. Homodimer. Interacts with FtsZ.

It localises to the cytoplasm. Its function is as follows. Cell division protein that is part of the divisome complex and is recruited early to the Z-ring. Probably stimulates Z-ring formation, perhaps through the cross-linking of FtsZ protofilaments. Its function overlaps with FtsA. This Oenococcus oeni (strain ATCC BAA-331 / PSU-1) protein is Cell division protein SepF.